Here is a 180-residue protein sequence, read N- to C-terminus: Telokin-like protein 20 (180 aa).

Residues 112-180 form a disordered region; it reads SKTDAAVHTS…KQKLDNAKQD (69 aa). Residues 156–165 show a composition bias toward acidic residues; it reads DFEENIDDGD.

In Lepidoptera (butterflies and moths), this protein is Telokin-like protein 20 (TLP20).